The following is a 243-amino-acid chain: Ubiquinone/menaquinone biosynthesis C-methyltransferase UbiE (243 aa).

Residues Thr-69, Asp-90, and 116–117 (DA) each bind S-adenosyl-L-methionine.

Belongs to the class I-like SAM-binding methyltransferase superfamily. MenG/UbiE family.

The enzyme catalyses a 2-demethylmenaquinol + S-adenosyl-L-methionine = a menaquinol + S-adenosyl-L-homocysteine + H(+). The catalysed reaction is a 2-methoxy-6-(all-trans-polyprenyl)benzene-1,4-diol + S-adenosyl-L-methionine = a 5-methoxy-2-methyl-3-(all-trans-polyprenyl)benzene-1,4-diol + S-adenosyl-L-homocysteine + H(+). The protein operates within quinol/quinone metabolism; menaquinone biosynthesis; menaquinol from 1,4-dihydroxy-2-naphthoate: step 2/2. It functions in the pathway cofactor biosynthesis; ubiquinone biosynthesis. Its function is as follows. Methyltransferase required for the conversion of demethylmenaquinol (DMKH2) to menaquinol (MKH2) and the conversion of 2-polyprenyl-6-methoxy-1,4-benzoquinol (DDMQH2) to 2-polyprenyl-3-methyl-6-methoxy-1,4-benzoquinol (DMQH2). The protein is Ubiquinone/menaquinone biosynthesis C-methyltransferase UbiE of Burkholderia ambifaria (strain MC40-6).